An 819-amino-acid chain; its full sequence is Lon protease (819 aa).

Residues 1–14 (MNSTNNTDSQNLDP) are compositionally biased toward polar residues. The segment at 1–41 (MNSTNNTDSQNLDPNASEVEKLLDESAEAEEKTDDHTPPSE) is disordered. A compositionally biased stretch (basic and acidic residues) spans 18–38 (EVEKLLDESAEAEEKTDDHTP). Residues 42–239 (LFILPLNKRP…KALVLLKKEL (198 aa)) form the Lon N-terminal domain. 392–399 (GPPGVGKT) is an ATP binding site. The region spanning 634 to 818 (KTPVGVATGL…DDVFKIAFPG (185 aa)) is the Lon proteolytic domain. Residues Ser-724 and Lys-767 contribute to the active site.

It belongs to the peptidase S16 family. In terms of assembly, homohexamer. Organized in a ring with a central cavity.

The protein resides in the cytoplasm. The enzyme catalyses Hydrolysis of proteins in presence of ATP.. ATP-dependent serine protease that mediates the selective degradation of mutant and abnormal proteins as well as certain short-lived regulatory proteins. Required for cellular homeostasis and for survival from DNA damage and developmental changes induced by stress. Degrades polypeptides processively to yield small peptide fragments that are 5 to 10 amino acids long. Binds to DNA in a double-stranded, site-specific manner. The sequence is that of Lon protease from Chlamydia muridarum (strain MoPn / Nigg).